Reading from the N-terminus, the 35-residue chain is uncharacterized protein (35 aa).

A helical membrane pass occupies residues 14 to 34; sequence LAHLIGIIYLIIILGTLVMLF.

Its subcellular location is the endoplasmic reticulum membrane. This is an uncharacterized protein from Saccharomyces cerevisiae (strain ATCC 204508 / S288c) (Baker's yeast).